We begin with the raw amino-acid sequence, 140 residues long: Profilin (140 aa).

It belongs to the profilin family. Occurs in many kinds of cells as a complex with monomeric actin in a 1:1 ratio.

Its function is as follows. Binds to actin and affects the structure of the cytoskeleton. At high concentrations, profilin prevents the polymerization of actin, whereas it enhances it at low concentrations. By binding to PIP2, it inhibits the formation of IP3 and DG. The polypeptide is Profilin (Suberites domuncula (Sponge)).